The primary structure comprises 5206 residues: Multifunctional-autoprocessing repeats-in-toxin (5206 aa).

A signal peptide spans 1 to 19; sequence MGKPFWRSVEYFFTGNYSA. RtxA repeat units follow at residues 101–118, 121–138, 141–157, 161–184, 187–204, 207–224, 255–272, 275–291, 584–601, 604–620, 624–641, 644–658, 741–753, 759–771, 782–798, 801–816, 820–835, 841–855, 858–875, 877–891, 896–910, 915–932, 934–950, 972–984, 991–1006, 1031–1043, 1067–1079, 1087–1102, 1110–1122, 1125–1142, 1145–1159, 1163–1179, 1184–1199, 1201–1217, 1220–1236, 1242–1256, 1258–1275, 1296–1313, and 1315–1332; these read GAAG…GDVS, GAAA…GNVT, GAGG…QGNL, GAGA…GDVT, GAGA…GNIT, GAGA…GDIT, GVGG…GDIH, GGGA…GSSF, GAGG…GNVY, GGGI…FGNT, GGGA…GDLT, GAGL…SKQG, AGGA…VGDG, MLGG…HISG, ALGG…GNTL, MGGG…DGTT, MVGG…NGDT, GVGN…GQTL, MGAA…TSIA, MIGA…GEGN, MGGL…GNGD, MVAE…MSVA, MLAK…GTTL, MIGQ…KVGN, MVGK…DGTS, GKAN…GDGL, AAAK…HVGD, AGKG…GTTV, GNVM…GTTI, AKGK…LGVN, WGQA…DGDR, AKGE…GKEV, GKAN…DDYT, AWGK…GRNV, AKGE…GDSF, KGNI…MQVT, AKGK…LSVT, AWGK…LNVA, and MKGK…LNIN. The segment covering 1606–1626 has biased composition (polar residues); it reads SQQANAVSEHATQNQASQNAL. 2 disordered regions span residues 1606–1682 and 1738–1895; these read SQQA…ESEA and IAAA…EQEA. Basic and acidic residues predominate over residues 1627–1646; it reads SDKERAEADRQRLEQEKQKQ. Polar residues predominate over residues 1652-1671; sequence GSQSQLESTDQQALGNNGQA. Residues 1778 to 1805 are compositionally biased toward basic and acidic residues; the sequence is AEAKADAETRKADAVAKSNDAKQAESDA. Residues 1825–1834 show a composition bias toward polar residues; that stretch reads NKANQAQNDA. Residues 1835-1849 show a composition bias toward basic and acidic residues; that stretch reads KGTKQNEGDRPDREG. Residues 1870–1880 show a composition bias toward polar residues; the sequence is SHITTDSQTNA. A membrane localization region (MLD) region spans residues 2377 to 2461; the sequence is ELMSVTELLD…SLLNQVNSRL (85 aa). Positions 2537 to 2901 are rho inactivation domain (RID); the sequence is EYGQVVADTI…HQVTDVLDAL (365 aa). Residues 2998–3113 form an ABH effector region region; that stretch reads VVLFLHGSGS…MPSMTKAITA (116 aa). The Peptidase C80 domain maps to 4111-4295; that stretch reads PTADGGESRF…AENNKVSLSW (185 aa). 1D-myo-inositol hexakisphosphate is bound by residues 4117–4119, 4144–4145, and Arg4175; these read ESR and KH. Residue His4181 is the For cysteine protease activity of the active site. Ser4226 provides a ligand contact to 1D-myo-inositol hexakisphosphate. The active-site Nucleophile; for cysteine protease activity is Cys4230. Residues 4259–4261, 4272–4273, Lys4285, and Lys4290 each bind 1D-myo-inositol hexakisphosphate; these read SVR and RK. 2 disordered regions span residues 4333–4362 and 4738–4779; these read GAIG…ANNK and LKEK…ETPD. Low complexity predominate over residues 4750 to 4762; that stretch reads SSVSVNGASVNSA.

Requires Mg(2+) as cofactor.

It is found in the secreted. Its subcellular location is the host cytoplasm. The protein localises to the host cytosol. The protein resides in the host cell membrane. The catalysed reaction is L-lysyl-/S-(2E,6E,10E)-geranylgeranyl-L-cysteinyl-[protein] + hexadecanoyl-CoA = N(6)-hexadecanoyl-L-lysyl-/S-(2E,6E,10E)-geranylgeranyl-L-cysteinyl-[protein] + CoA + H(+). It carries out the reaction L-lysyl-/S-(2E,6E,10E)-geranylgeranyl-L-cysteinyl-[protein] + dodecanoyl-CoA = N(6)-dodecanoyl-L-lysyl-/S-(2E,6E,10E)-geranylgeranyl-L-cysteinyl-[protein] + CoA + H(+). It catalyses the reaction L-lysyl-/S-(2E,6E,10E)-geranylgeranyl-L-cysteinyl-[protein] + decanoyl-CoA = N(6)-decanoyl-L-lysyl-/S-(2E,6E,10E)-geranylgeranyl-L-cysteinyl-[protein] + CoA + H(+). In terms of biological role, precursor of a multifunctional toxin that causes destruction of the actin cytoskeleton by covalent cross-linking of actin and inactivation of Rho GTPases when translocated into the host cytoplasm. Upon translocation into the host cell, undergoes autoprocessing in cis mediated by the peptidase C80 domain (also named CPD domain): the protease activity is activated upon binding inositol hexakisphosphate (InsP6) present at the host cell membrane and delivers the Cysteine protease domain-containing toxin F3 chain to the host cytosol. The Cysteine protease domain-containing toxin F3 chain will then further cleave and release effector toxin chains that cause disassembly of the actin cytoskeleton and enhance V.vulnificus colonization of the small intestine, possibly by facilitating evasion of phagocytic cells. Its function is as follows. Following autocatalytic cleavage in cis, this chain mediates processing in trans to release other individual toxin chains to the host cytosol. Released effector toxin chains cause disassembly of the actin cytoskeleton and enhance V.vulnificus colonization of the small intestine, possibly by facilitating evasion of phagocytic cells. Actin-directed toxin that catalyzes the covalent cross-linking of host cytoplasmic monomeric actin. Mediates the cross-link between 'Lys-50' of one monomer and 'Glu-270' of another actin monomer, resulting in formation of highly toxic actin oligomers that cause cell rounding. The toxin can be highly efficient at very low concentrations by acting on formin homology family proteins: toxic actin oligomers bind with high affinity to formins and adversely affect both nucleation and elongation abilities of formins, causing their potent inhibition in both profilin-dependent and independent manners. Acts as an acid--amino-acid ligase that transfers the gamma-phosphoryl group of ATP to the 'Glu-270' actin residue, resulting in the formation of an activated acyl phosphate intermediate. This intermediate is further hydrolyzed and the energy of hydrolysis is utilized for the formation of the amide bond between actin subunits. Functionally, N-epsilon-fatty acyltransferase that mediates lysine-palmitoylation of host Rho GTPase proteins, with a strong preference for host Rac1. After delivery to the host cytosol, localizes to the host cell membrane where it palmitoylates host Rho GTPase proteins, resulting in loss of all active GTP-bound Rho and subsequent actin depolymerization. Prenylation of host Rac1 at the C-terminus is required for lysine-palmitoylation. In terms of biological role, indirectly activates the small GTPase CDC42. This is Multifunctional-autoprocessing repeats-in-toxin from Vibrio vulnificus.